We begin with the raw amino-acid sequence, 338 residues long: Ketol-acid reductoisomerase (NADP(+)) (338 aa).

Residues 2–182 (TKMYYEKDTD…GGARAGVLET (181 aa)) form the KARI N-terminal Rossmann domain. NADP(+) contacts are provided by residues 25–28 (YGSQ), Ser-51, Ser-53, and 83–86 (DELQ). His-108 is a catalytic residue. An NADP(+)-binding site is contributed by Gly-134. A KARI C-terminal knotted domain is found at 183-330 (TFRTETETDL…SEIRKLYCWN (148 aa)). Positions 191, 195, 227, and 231 each coordinate Mg(2+). Ser-252 serves as a coordination point for substrate.

The protein belongs to the ketol-acid reductoisomerase family. The cofactor is Mg(2+).

It carries out the reaction (2R)-2,3-dihydroxy-3-methylbutanoate + NADP(+) = (2S)-2-acetolactate + NADPH + H(+). The enzyme catalyses (2R,3R)-2,3-dihydroxy-3-methylpentanoate + NADP(+) = (S)-2-ethyl-2-hydroxy-3-oxobutanoate + NADPH + H(+). Its pathway is amino-acid biosynthesis; L-isoleucine biosynthesis; L-isoleucine from 2-oxobutanoate: step 2/4. It functions in the pathway amino-acid biosynthesis; L-valine biosynthesis; L-valine from pyruvate: step 2/4. Functionally, involved in the biosynthesis of branched-chain amino acids (BCAA). Catalyzes an alkyl-migration followed by a ketol-acid reduction of (S)-2-acetolactate (S2AL) to yield (R)-2,3-dihydroxy-isovalerate. In the isomerase reaction, S2AL is rearranged via a Mg-dependent methyl migration to produce 3-hydroxy-3-methyl-2-ketobutyrate (HMKB). In the reductase reaction, this 2-ketoacid undergoes a metal-dependent reduction by NADPH to yield (R)-2,3-dihydroxy-isovalerate. In Clostridium botulinum (strain Alaska E43 / Type E3), this protein is Ketol-acid reductoisomerase (NADP(+)).